A 328-amino-acid polypeptide reads, in one-letter code: Ribosomal RNA small subunit methyltransferase C (328 aa).

The protein belongs to the methyltransferase superfamily. RsmC family. Monomer.

It is found in the cytoplasm. It catalyses the reaction guanosine(1207) in 16S rRNA + S-adenosyl-L-methionine = N(2)-methylguanosine(1207) in 16S rRNA + S-adenosyl-L-homocysteine + H(+). Functionally, specifically methylates the guanine in position 1207 of 16S rRNA in the 30S particle. The chain is Ribosomal RNA small subunit methyltransferase C from Pasteurella multocida (strain Pm70).